Consider the following 1102-residue polypeptide: Phosphatidylinositol 4,5-bisphosphate 3-kinase catalytic subunit gamma isoform (1102 aa).

In terms of domain architecture, PI3K-ABD spans 34 to 141 (SMELIPIEFV…PGQIHVVQRH (108 aa)). In terms of domain architecture, PI3K-RBD spans 217–309 (NNCVFIVIHR…GEEIHLVLDT (93 aa)). Residues 357 to 521 (CDRKFRVKIR…NSMSISILLD (165 aa)) form the C2 PI3K-type domain. The PIK helical domain occupies 541–723 (DRVRAEMPNQ…AVILEAYLRG (183 aa)). The region spanning 797–1080 (VIEKCKVMAS…QIEVCRDKGW (284 aa)) is the PI3K/PI4K catalytic domain. Positions 803 to 809 (VMASKKK) are G-loop. ATP is bound by residues 829-838 (GIIFKHGDDL) and 864-872 (LLPYGCIST). Positions 943 to 951 (GIGDRHNDN) are catalytic loop. Residue 961-969 (FHIDFGHIL) coordinates ATP. Residues 962–988 (HIDFGHILGNYKSFLGINKERVPFVLT) form an activation loop region. T1024 carries the phosphothreonine; by PKA modification. S1101 carries the phosphoserine; by autocatalysis modification.

The protein belongs to the PI3/PI4-kinase family. Heterodimer of a catalytic subunit PIK3CG and a PIK3R5 or PIK3R6 regulatory subunit. Interacts with GRK2 through the PIK helical domain. Interaction with GRK2 is required for targeting to agonist-occupied receptor. Interacts with PDE3B; regulates PDE3B activity and thereby cAMP levels in cells. Interacts with TPM2. Interacts with EPHA8; regulates integrin-mediated cell adhesion to substrate. Interacts with HRAS; the interaction is required for membrane recruitment and beta-gamma G protein dimer-dependent activation of the PI3K gamma complex PIK3CG:PIK3R6. Post-translationally, autophosphorylation at Ser-1101 has no effect on the phosphatidylinositol-4,5-bisphosphate 3-kinase activity.

The protein localises to the cytoplasm. Its subcellular location is the cell membrane. It catalyses the reaction a 1,2-diacyl-sn-glycero-3-phospho-(1D-myo-inositol-4,5-bisphosphate) + ATP = a 1,2-diacyl-sn-glycero-3-phospho-(1D-myo-inositol-3,4,5-trisphosphate) + ADP + H(+). The enzyme catalyses a 1,2-diacyl-sn-glycero-3-phospho-(1D-myo-inositol) + ATP = a 1,2-diacyl-sn-glycero-3-phospho-(1D-myo-inositol-3-phosphate) + ADP + H(+). The catalysed reaction is a 1,2-diacyl-sn-glycero-3-phospho-(1D-myo-inositol 4-phosphate) + ATP = a 1,2-diacyl-sn-glycero-3-phospho-(1D-myo-inositol-3,4-bisphosphate) + ADP + H(+). It carries out the reaction L-seryl-[protein] + ATP = O-phospho-L-seryl-[protein] + ADP + H(+). The protein operates within phospholipid metabolism; phosphatidylinositol phosphate biosynthesis. Its activity is regulated as follows. Activated by both the alpha and the beta-gamma G proteins following stimulation of G protein-coupled receptors (GPCRs). Activation by GPCRs is assisted by the regulatory subunits (PIK3R5 or PIK3R6) leading to the translocation from the cytosol to the plasma membrane and to kinase activation. When bound to PIK3R5 the PI3K activity of PIK3CG could be activated greater than 100-fold by the beta-gamma G proteins. In terms of biological role, phosphoinositide-3-kinase (PI3K) that phosphorylates PtdIns(4,5)P2 (Phosphatidylinositol 4,5-bisphosphate) to generate phosphatidylinositol 3,4,5-trisphosphate (PIP3). PIP3 plays a key role by recruiting PH domain-containing proteins to the membrane, including AKT1 and PDPK1, activating signaling cascades involved in cell growth, survival, proliferation, motility and morphology. Links G-protein coupled receptor activation to PIP3 production. Involved in immune, inflammatory and allergic responses. Modulates leukocyte chemotaxis to inflammatory sites and in response to chemoattractant agents. May control leukocyte polarization and migration by regulating the spatial accumulation of PIP3 and by regulating the organization of F-actin formation and integrin-based adhesion at the leading edge. Controls motility of dendritic cells. Participates in T-lymphocyte migration. Regulates T-lymphocyte proliferation and cytokine production. Required for B-lymphocyte development and signaling. Together with other PI3Ks are involved in the oxidative burst produced by neutrophils in response to chemotactic agents. Together with PIK3CD regulate neutrophil extravasation. Together with PIK3CB promotes platelet aggregation and thrombosis. Regulates alpha-IIb/beta-3 integrins (ITGA2B/ ITGB3) adhesive function in platelets downstream of P2Y12 through a lipid kinase activity-independent mechanism. May have also a lipid kinase activity-dependent function in platelet aggregation. Involved in endothelial progenitor cell migration. Negative regulator of cardiac contractility. Modulates cardiac contractility by anchoring protein kinase A (PKA) and PDE3B activation, reducing cAMP levels. Regulates cardiac contractility also by promoting beta-adrenergic receptor internalization by binding to GRK2 and by non-muscle tropomyosin phosphorylation. Also has serine/threonine protein kinase activity: both lipid and protein kinase activities are required for beta-adrenergic receptor endocytosis. May also have a scaffolding role in modulating cardiac contractility. Contribute to cardiac hypertrophy under pathological stress. Through simultaneous binding of PDE3B to RAPGEF3 and PIK3R6 is assembled in a signaling complex in which the PI3K gamma complex is activated by RAPGEF3 and which is involved in angiogenesis. In neutrophils, participates in a phospholipase C-activating N-formyl peptide-activated GPCR (G protein-coupled receptor) signaling pathway downstream of RASGRP4-mediated Ras-activation, to promote neutrophil functional responses. The protein is Phosphatidylinositol 4,5-bisphosphate 3-kinase catalytic subunit gamma isoform (PIK3CG) of Sus scrofa (Pig).